The following is a 256-amino-acid chain: Phosphatidylglycerol--prolipoprotein diacylglyceryl transferase (256 aa).

Transmembrane regions (helical) follow at residues 19-39 (VHWY…LGYW), 56-76 (LIFY…MLFY), and 91-111 (IWEG…AAWL). A 1,2-diacyl-sn-glycero-3-phospho-(1'-sn-glycerol) is bound at residue Arg139. The helical transmembrane segment at 231 to 251 (FGWLTMGQVLSIPMLLIGIWL) threads the bilayer.

The protein belongs to the Lgt family.

The protein localises to the cell inner membrane. The catalysed reaction is L-cysteinyl-[prolipoprotein] + a 1,2-diacyl-sn-glycero-3-phospho-(1'-sn-glycerol) = an S-1,2-diacyl-sn-glyceryl-L-cysteinyl-[prolipoprotein] + sn-glycerol 1-phosphate + H(+). Its pathway is protein modification; lipoprotein biosynthesis (diacylglyceryl transfer). In terms of biological role, catalyzes the transfer of the diacylglyceryl group from phosphatidylglycerol to the sulfhydryl group of the N-terminal cysteine of a prolipoprotein, the first step in the formation of mature lipoproteins. The sequence is that of Phosphatidylglycerol--prolipoprotein diacylglyceryl transferase from Legionella pneumophila (strain Lens).